Reading from the N-terminus, the 121-residue chain is Large ribosomal subunit protein bL12 (121 aa).

Belongs to the bacterial ribosomal protein bL12 family. Homodimer. Part of the ribosomal stalk of the 50S ribosomal subunit. Forms a multimeric L10(L12)X complex, where L10 forms an elongated spine to which 2 to 4 L12 dimers bind in a sequential fashion. Binds GTP-bound translation factors.

Functionally, forms part of the ribosomal stalk which helps the ribosome interact with GTP-bound translation factors. Is thus essential for accurate translation. The chain is Large ribosomal subunit protein bL12 from Malacoplasma penetrans (strain HF-2) (Mycoplasma penetrans).